The following is a 465-amino-acid chain: Glutamate--tRNA ligase (465 aa).

Positions 5–15 (PSPTGMFHVGG) match the 'HIGH' region motif. Zn(2+) contacts are provided by Cys-96, Cys-98, Cys-118, and Asp-120. The 'KMSKS' region signature appears at 228 to 232 (KLSKR). Position 231 (Lys-231) interacts with ATP.

It belongs to the class-I aminoacyl-tRNA synthetase family. Glutamate--tRNA ligase type 1 subfamily. Monomer. Zn(2+) serves as cofactor.

It localises to the cytoplasm. The enzyme catalyses tRNA(Glu) + L-glutamate + ATP = L-glutamyl-tRNA(Glu) + AMP + diphosphate. Functionally, catalyzes the attachment of glutamate to tRNA(Glu) in a two-step reaction: glutamate is first activated by ATP to form Glu-AMP and then transferred to the acceptor end of tRNA(Glu). This Salinispora tropica (strain ATCC BAA-916 / DSM 44818 / JCM 13857 / NBRC 105044 / CNB-440) protein is Glutamate--tRNA ligase.